Reading from the N-terminus, the 202-residue chain is dTTP/UTP pyrophosphatase (202 aa).

Residue Asp-76 is the Proton acceptor of the active site.

Belongs to the Maf family. YhdE subfamily. The cofactor is a divalent metal cation.

The protein localises to the cytoplasm. The catalysed reaction is dTTP + H2O = dTMP + diphosphate + H(+). It catalyses the reaction UTP + H2O = UMP + diphosphate + H(+). In terms of biological role, nucleoside triphosphate pyrophosphatase that hydrolyzes dTTP and UTP. May have a dual role in cell division arrest and in preventing the incorporation of modified nucleotides into cellular nucleic acids. The chain is dTTP/UTP pyrophosphatase from Neisseria gonorrhoeae (strain ATCC 700825 / FA 1090).